We begin with the raw amino-acid sequence, 198 residues long: MSKVLYIKANIKNEGESRTFKVSDSFVEEYKKNNPEDQIITLDLYKENIDFLRADDLGKLFGPKDEESKNNSILKYAYQFADADKYIIAAPMWNLSFPAILKAYIDYVSVSGITFKYTAEGPVGLLNNKKAVHIVSRGGGYDNSPYEMGDRYLRTILGFFGIKDIETIDIDNLDVIGVNVKEKVKEGIEKAISLAKKF.

FMN is bound by residues 92 to 95 and 136 to 139; these read MWNL and SRGG.

The protein belongs to the azoreductase type 1 family. Homodimer. FMN is required as a cofactor.

The catalysed reaction is 2 a quinone + NADH + H(+) = 2 a 1,4-benzosemiquinone + NAD(+). It carries out the reaction N,N-dimethyl-1,4-phenylenediamine + anthranilate + 2 NAD(+) = 2-(4-dimethylaminophenyl)diazenylbenzoate + 2 NADH + 2 H(+). Functionally, quinone reductase that provides resistance to thiol-specific stress caused by electrophilic quinones. Its function is as follows. Also exhibits azoreductase activity. Catalyzes the reductive cleavage of the azo bond in aromatic azo compounds to the corresponding amines. The protein is FMN-dependent NADH:quinone oxidoreductase of Clostridium perfringens (strain SM101 / Type A).